A 277-amino-acid polypeptide reads, in one-letter code: 3-methyl-2-oxobutanoate hydroxymethyltransferase (277 aa).

Mg(2+) contacts are provided by D53 and D96. Residues 53 to 54 (DS), D96, and K126 each bind 3-methyl-2-oxobutanoate. E128 contributes to the Mg(2+) binding site. The active-site Proton acceptor is the E195.

Belongs to the PanB family. Homodecamer; pentamer of dimers. It depends on Mg(2+) as a cofactor.

The protein localises to the cytoplasm. It catalyses the reaction 3-methyl-2-oxobutanoate + (6R)-5,10-methylene-5,6,7,8-tetrahydrofolate + H2O = 2-dehydropantoate + (6S)-5,6,7,8-tetrahydrofolate. It functions in the pathway cofactor biosynthesis; (R)-pantothenate biosynthesis; (R)-pantoate from 3-methyl-2-oxobutanoate: step 1/2. Catalyzes the reversible reaction in which hydroxymethyl group from 5,10-methylenetetrahydrofolate is transferred onto alpha-ketoisovalerate to form ketopantoate. The sequence is that of 3-methyl-2-oxobutanoate hydroxymethyltransferase from Chlorobaculum tepidum (strain ATCC 49652 / DSM 12025 / NBRC 103806 / TLS) (Chlorobium tepidum).